The following is a 207-amino-acid chain: Ribonuclease HII (207 aa).

One can recognise an RNase H type-2 domain in the interval 12 to 201; that stretch reads DLVAGVDEVG…VRAAWEAREG (190 aa). Positions 18, 19, and 110 each coordinate a divalent metal cation.

Belongs to the RNase HII family. Mn(2+) is required as a cofactor. It depends on Mg(2+) as a cofactor.

It is found in the cytoplasm. The enzyme catalyses Endonucleolytic cleavage to 5'-phosphomonoester.. In terms of biological role, endonuclease that specifically degrades the RNA of RNA-DNA hybrids. The polypeptide is Ribonuclease HII (Pseudomonas putida (strain GB-1)).